A 20-amino-acid chain; its full sequence is Alanine aminotransferase 1 (20 aa).

K11 is modified (N6-(pyridoxal phosphate)lysine). The N-linked (Glc) (glycation) lysine; in vitro glycan is linked to K11.

This sequence belongs to the class-I pyridoxal-phosphate-dependent aminotransferase family. Alanine aminotransferase subfamily. Homodimer. It depends on pyridoxal 5'-phosphate as a cofactor. In terms of processing, glycation of Lys-11 inactivates the enzyme.

Its subcellular location is the cytoplasm. It catalyses the reaction L-alanine + 2-oxoglutarate = pyruvate + L-glutamate. It functions in the pathway amino-acid degradation; L-alanine degradation via transaminase pathway; pyruvate from L-alanine: step 1/1. Functionally, catalyzes the reversible transamination between alanine and 2-oxoglutarate to form pyruvate and glutamate. Participates in cellular nitrogen metabolism and also in liver gluconeogenesis starting with precursors transported from skeletal muscles. The polypeptide is Alanine aminotransferase 1 (GPT) (Sus scrofa (Pig)).